Reading from the N-terminus, the 156-residue chain is 6,7-dimethyl-8-ribityllumazine synthase (156 aa).

Residues F23, 57–59, and 81–83 each bind 5-amino-6-(D-ribitylamino)uracil; these read SWE and AVV. Position 86 to 87 (86 to 87) interacts with (2S)-2-hydroxy-3-oxobutyl phosphate; that stretch reads ET. H89 (proton donor) is an active-site residue. Position 114 (F114) interacts with 5-amino-6-(D-ribitylamino)uracil. A (2S)-2-hydroxy-3-oxobutyl phosphate-binding site is contributed by R128.

The protein belongs to the DMRL synthase family.

It carries out the reaction (2S)-2-hydroxy-3-oxobutyl phosphate + 5-amino-6-(D-ribitylamino)uracil = 6,7-dimethyl-8-(1-D-ribityl)lumazine + phosphate + 2 H2O + H(+). It functions in the pathway cofactor biosynthesis; riboflavin biosynthesis; riboflavin from 2-hydroxy-3-oxobutyl phosphate and 5-amino-6-(D-ribitylamino)uracil: step 1/2. In terms of biological role, catalyzes the formation of 6,7-dimethyl-8-ribityllumazine by condensation of 5-amino-6-(D-ribitylamino)uracil with 3,4-dihydroxy-2-butanone 4-phosphate. This is the penultimate step in the biosynthesis of riboflavin. This Salinibacter ruber (strain DSM 13855 / M31) protein is 6,7-dimethyl-8-ribityllumazine synthase.